The sequence spans 316 residues: Gene 34 protein (316 aa).

The protein belongs to the herpesviridae UL95 family.

This is Gene 34 protein (34) from Saimiriine herpesvirus 2 (strain 11) (SaHV-2).